Consider the following 445-residue polypeptide: MGRLFGTDGVRGVANRELTAELALALGAATAQHLASSTGPGRRVAVVGRDPRASGEMLEAAVIAGLTSQGVDALRVGVLPTPAVAYLTGAYDADFGVMISASHNPMPDNGIKIFGPGGHKLDDATENRIESLVAAGPGLRPVGSEIGRVIDAEDAADRYLRHVSKACTTRLDGLTVVVDCAHGAASEVGPRAYRAAGARVIEINADPNGLNINDDCGSTHLEAIRAAVLAHGADLGVAHDGDADRCLAVDANGDLVDGDAIMVVLALAMQEAGELASDTLVTTVMSNLGLHLAMREAGVNVRTTGVGDRYVLEELRAGDYSLGGEQSGHIVMPGLGSTGDGIVTGLRLMTRMVATGASLAALASRMQTLPQVLINVQVTDKATAAAAPSVQAAVDRAETELGDTGRILLRPSGTEPLIRVMVEAADEEAAHRLATSVADAVSAAG.

The Phosphoserine intermediate role is filled by serine 102. Residues serine 102, aspartate 240, aspartate 242, and aspartate 244 each coordinate Mg(2+). Serine 102 bears the Phosphoserine mark.

The protein belongs to the phosphohexose mutase family. Mg(2+) serves as cofactor. Activated by phosphorylation.

The enzyme catalyses alpha-D-glucosamine 1-phosphate = D-glucosamine 6-phosphate. In terms of biological role, catalyzes the conversion of glucosamine-6-phosphate to glucosamine-1-phosphate. The chain is Phosphoglucosamine mutase from Mycobacterium ulcerans (strain Agy99).